Reading from the N-terminus, the 437-residue chain is GTPase Obg (437 aa).

An Obg domain is found at 2–160 (SMFLDTAKIS…RELQLELKIL (159 aa)). The OBG-type G domain maps to 161–338 (ADVGLVGFPS…LMDATAELLA (178 aa)). GTP is bound by residues 167-174 (GFPSVGKS), 192-196 (FTTIV), 214-217 (DLPG), 284-287 (NKMD), and 319-321 (SSL). Mg(2+) contacts are provided by S174 and T194. The 79-residue stretch at 359–437 (GFNEDERPFE…IGNFEFEFVD (79 aa)) folds into the OCT domain.

Belongs to the TRAFAC class OBG-HflX-like GTPase superfamily. OBG GTPase family. As to quaternary structure, monomer. Mg(2+) is required as a cofactor.

It localises to the cytoplasm. An essential GTPase which binds GTP, GDP and possibly (p)ppGpp with moderate affinity, with high nucleotide exchange rates and a fairly low GTP hydrolysis rate. Plays a role in control of the cell cycle, stress response, ribosome biogenesis and in those bacteria that undergo differentiation, in morphogenesis control. This chain is GTPase Obg, found in Streptococcus agalactiae serotype Ia (strain ATCC 27591 / A909 / CDC SS700).